The chain runs to 228 residues: Ribose-5-phosphate isomerase A (228 aa).

Residues 32–35 (TGST), 85–88 (DGAD), and 98–101 (KGGG) each bind substrate. The Proton acceptor role is filled by Glu107. Lys125 contributes to the substrate binding site.

This sequence belongs to the ribose 5-phosphate isomerase family. In terms of assembly, homodimer.

It catalyses the reaction aldehydo-D-ribose 5-phosphate = D-ribulose 5-phosphate. It participates in carbohydrate degradation; pentose phosphate pathway; D-ribose 5-phosphate from D-ribulose 5-phosphate (non-oxidative stage): step 1/1. Its function is as follows. Catalyzes the reversible conversion of ribose-5-phosphate to ribulose 5-phosphate. This Cupriavidus pinatubonensis (strain JMP 134 / LMG 1197) (Cupriavidus necator (strain JMP 134)) protein is Ribose-5-phosphate isomerase A.